The chain runs to 201 residues: Pro-P-factor (201 aa).

An N-terminal signal peptide occupies residues 1–20; the sequence is MKITAVIALLFSLAAASPIP. 5 propeptides span residues 21–31, 58–65, 92–99, 126–133, and 160–201; these read VADPGVVSVSK, EFEAAPAK, EFEAAPEK, and TEED…KFES. 2 N-linked (GlcNAc...) asparagine glycosylation sites follow: asparagine 187 and asparagine 194.

Post-translationally, proteolytically cleaved by kpr, probably at the C-terminal side of dibasic Lys-Arg residues. Glycosylated. Most of the precursor molecules are glycosylated on at least one site, but only a small proportion are glycosylated on both sites.

Its subcellular location is the secreted. Its function is as follows. In h- cells under nutritional starvation, P-factor induces alteration of cell morphology toward mating, arrest of the cell cycle at the G1 phase prior to the initiation of DNA synthesis and indirect transcriptional activation of the sxa2 gene which down-regulates the signaling pathway. In Schizosaccharomyces pombe (strain 972 / ATCC 24843) (Fission yeast), this protein is Pro-P-factor (map2).